The sequence spans 191 residues: Pentapeptide repeat protein MfpA (191 aa).

A Pentapeptide repeat domain is found at 115–154 (CRLREVSLVGADLRKAVLRRADLTGSRVQDARLEEADLRG).

This sequence belongs to the pentapeptide repeat protein family. As to quaternary structure, homodimer. Probably interacts with DNA gyrase.

When present on multicopy plasmids confers increased resistance to fluoroquinolone antibiotics such as ciprofloxacin and sparfloxacin but not the quinolone nalidixic acid. Forms a structure that exhibits size, shape and electrostatic similarity to B-form DNA; it may bind to DNA gyrase which is postulated to protect it from fluoroquinolones. The protein is Pentapeptide repeat protein MfpA of Mycolicibacterium smegmatis (strain ATCC 700084 / mc(2)155) (Mycobacterium smegmatis).